We begin with the raw amino-acid sequence, 1347 residues long: Ubinuclein-2 (1347 aa).

Positions 1-134 are disordered; that stretch reads MAEPRRVAFI…ETVRLELVLK (134 aa). S13 bears the Phosphoserine mark. Basic and acidic residues-rich tracts occupy residues 16–37 and 67–79; these read RRRE…EPPR and SREK…EVSR. Pro residues predominate over residues 93–110; sequence PEPPPPFPPLPLQPPPPR. Residues 122-134 are compositionally biased toward basic and acidic residues; sequence PPRETVRLELVLK. The residue at position 243 (T243) is a Phosphothreonine. S250 bears the Phosphoserine mark. The tract at residues 250-301 is disordered; sequence SDTEEDDITDNQKHKPPKVPKIKEDDIEMKKRKRKEEGEKEKKPRKKVPKQL. A Phosphothreonine modification is found at T252. Residue K272 forms a Glycyl lysine isopeptide (Lys-Gly) (interchain with G-Cter in SUMO2) linkage. A phosphoserine mark is found at S311, S416, S419, S422, and S584. 6 disordered regions span residues 573-597, 707-740, 815-849, 880-913, 981-1006, and 1035-1218; these read LQTD…KRVI, ECSP…AAAS, LATP…DLAH, GLQR…HALG, RLPL…TVPS, and ASPK…SSVV. Basic and acidic residues predominate over residues 574 to 584; the sequence is QTDEEREKNGS. A compositionally biased stretch (low complexity) spans 721-740; the sequence is VASVSGPPTSSSTAAIAAAS. The span at 823-832 shows a compositional bias: polar residues; the sequence is STQTTHSSSL. Positions 880 to 911 are enriched in low complexity; the sequence is GLQRSSQIHTSSSSQTHVSSSSQAQIAASSHA. The span at 985 to 996 shows a compositional bias: polar residues; that stretch reads STPSPGNGSQGS. Residues 1035 to 1045 are compositionally biased toward low complexity; the sequence is ASPKLAASPKP. Residues 1046–1060 show a composition bias toward pro residues; it reads ATSPKPLPSPKPSAS. 2 stretches are compositionally biased toward low complexity: residues 1061-1070 and 1077-1095; these read PKPSLSAKPS and SKSN…SSPN. K1068 is subject to N6-acetyllysine. 2 stretches are compositionally biased toward polar residues: residues 1101–1164 and 1174–1185; these read GSHS…NSLS and RGSNLNSSGANR. A Phosphoserine modification is found at S1123. Residue K1148 is modified to N6-acetyllysine.

This sequence belongs to the ubinuclein family. As to expression, expressed in several cell lines tested, including primary and transformed cell lines.

In Homo sapiens (Human), this protein is Ubinuclein-2 (UBN2).